The chain runs to 125 residues: Large ribosomal subunit protein bL12 (125 aa).

This sequence belongs to the bacterial ribosomal protein bL12 family. As to quaternary structure, homodimer. Part of the ribosomal stalk of the 50S ribosomal subunit. Forms a multimeric L10(L12)X complex, where L10 forms an elongated spine to which 2 to 4 L12 dimers bind in a sequential fashion. Binds GTP-bound translation factors.

Its function is as follows. Forms part of the ribosomal stalk which helps the ribosome interact with GTP-bound translation factors. Is thus essential for accurate translation. The polypeptide is Large ribosomal subunit protein bL12 (Cereibacter sphaeroides (strain ATCC 17023 / DSM 158 / JCM 6121 / CCUG 31486 / LMG 2827 / NBRC 12203 / NCIMB 8253 / ATH 2.4.1.) (Rhodobacter sphaeroides)).